A 316-amino-acid polypeptide reads, in one-letter code: MYTKILGTGSYLPVQVRSNADLEKMVDTSDEWIVTRTGIRERRIAGLDETVATMGFQAAEKTLEMAGIDKDDIGLIIVATTSSSHAFPSSACQVQRMLGIKDAASFDLAAACAGFTYALSVADQYVKSGAVKHAIVIGSDVLSRALDPEDRGTIILFGDGAGAVVLGASEQPGIMSTHLHADGRYGELLALPYPDRQQDQPAYVTMAGNEVFKVAVTELAHIVDETLQANNLDRTALDWLVPHQANLRIISATAKKLGMGMDKVVITLDRHGNTSAASVPSAFDEAVRDGRIQRGQLVLLEAFGGGFTWGSALVRF.

Residues Cys-112 and His-243 contribute to the active site. Positions 244–248 (QANLR) are ACP-binding. Residue Asn-273 is part of the active site.

This sequence belongs to the thiolase-like superfamily. FabH family. As to quaternary structure, homodimer.

The protein resides in the cytoplasm. The enzyme catalyses malonyl-[ACP] + acetyl-CoA + H(+) = 3-oxobutanoyl-[ACP] + CO2 + CoA. Its pathway is lipid metabolism; fatty acid biosynthesis. Functionally, catalyzes the condensation reaction of fatty acid synthesis by the addition to an acyl acceptor of two carbons from malonyl-ACP. Catalyzes the first condensation reaction which initiates fatty acid synthesis and may therefore play a role in governing the total rate of fatty acid production. Possesses both acetoacetyl-ACP synthase and acetyl transacylase activities. Its substrate specificity determines the biosynthesis of branched-chain and/or straight-chain of fatty acids. This Yersinia pestis (strain Pestoides F) protein is Beta-ketoacyl-[acyl-carrier-protein] synthase III.